A 201-amino-acid chain; its full sequence is NAD(P)H-dependent FMN reductase ntnL (201 aa).

FMN is bound by residues arginine 12, 90 to 93 (EYNG), and tyrosine 120.

As to quaternary structure, homodimer.

The enzyme catalyses FMNH2 + NADP(+) = FMN + NADPH + 2 H(+). The catalysed reaction is FMNH2 + NAD(+) = FMN + NADH + 2 H(+). The protein operates within secondary metabolite biosynthesis; terpenoid biosynthesis. Functionally, NAD(P)H-dependent FMN reductase; part of the gene cluster that mediates the biosynthesis of the meroterpenoids nectripenoids A and B, as well as cochliquninone D and isocochliquninone E. The pathway probably begins with the HR-PKS ntnH that catalyzes two chain-extension steps to form a reduced triketide, which then primes the SAT domain in the NR-PKS ntnG to initiate three more cycles of extension to give a linear hexaketide corresponding to the polyketide part of nectripenoids. The FAD-dependent monooxygenase ntnJ then performs an oxidative decarboxylation at C11 of the ntnH/ntnG product, via an electrophilic aromatic hydroxylation with concomitant ipso-decarboxylation. The membrane-bound polyprenyl transferase ntnF then introduces a farnesyl group before the FAD-dependent monooxygenase ntnK functions as the first epoxidase on terminal C12'-C13' olefin, followed by a second epoxidation on C7'-C8' catalyzed by ntnA. The terpene cyclase/mutase ntnI then initiates the sequential tricyclic ring formation through protonation of the terminal epoxide and catalyzes the regioselective and stereoselective 6/6/6-tricyclic ring formation. The cytochrome P450 monooxygenase ntnM may then hydroxylate C1'. This is NAD(P)H-dependent FMN reductase ntnL from Nectria sp.